Consider the following 345-residue polypeptide: Histidinol-phosphate aminotransferase (345 aa).

K206 is subject to N6-(pyridoxal phosphate)lysine.

It belongs to the class-II pyridoxal-phosphate-dependent aminotransferase family. Histidinol-phosphate aminotransferase subfamily. Homodimer. Requires pyridoxal 5'-phosphate as cofactor.

It carries out the reaction L-histidinol phosphate + 2-oxoglutarate = 3-(imidazol-4-yl)-2-oxopropyl phosphate + L-glutamate. The protein operates within amino-acid biosynthesis; L-histidine biosynthesis; L-histidine from 5-phospho-alpha-D-ribose 1-diphosphate: step 7/9. This is Histidinol-phosphate aminotransferase from Bacteroides fragilis (strain ATCC 25285 / DSM 2151 / CCUG 4856 / JCM 11019 / LMG 10263 / NCTC 9343 / Onslow / VPI 2553 / EN-2).